The chain runs to 447 residues: MKVTDKKIEGCQASITVEMDSTEVEEGLSKTYRRLVKKVEIPGFRKGKAPRDVFEKYVSREKMLDELVDDIVPEACQKAIQDEEIKPFATPKVAMVTTDPFVFSARIPLPPVVELGDYKTIRATKETVEIAEENIDTVVDQVLHQRATWETAERPVKMGDMLLMQVESTLNGEPYLNREDMQYSVREEAIYPAPGFGDCLVDMVAGEPKEFSIVFPEDHARAELAGKTAAFKVTVREIKEEKLPELNDAFAHELNPEFNTLSELRQRIRENMQDRQDDKAQAKFEDQIVEALIKMSKIDYPEVMVEAELDQIIEQQLQRLQSNVKSPEEFRAMLSQMTPEDMQQRYRPLAEQRVASSLVLGKLATTENLVPNDEEVDAEIEKLITDAGDKKEEEKALYNQSETRDRLIQLLTARKTMAFIDEIALQPALEAVEPKADEDEKTEEADK.

In terms of domain architecture, PPIase FKBP-type spans G159–P244.

The protein belongs to the FKBP-type PPIase family. Tig subfamily.

Its subcellular location is the cytoplasm. The catalysed reaction is [protein]-peptidylproline (omega=180) = [protein]-peptidylproline (omega=0). Functionally, involved in protein export. Acts as a chaperone by maintaining the newly synthesized protein in an open conformation. Functions as a peptidyl-prolyl cis-trans isomerase. The sequence is that of Trigger factor from Dehalococcoides mccartyi (strain CBDB1).